A 663-amino-acid polypeptide reads, in one-letter code: Protein MNE1 (663 aa).

The polypeptide is Protein MNE1 (MNE1) (Saccharomyces cerevisiae (strain ATCC 204508 / S288c) (Baker's yeast)).